The primary structure comprises 245 residues: Phosphoadenosine 5'-phosphosulfate reductase (245 aa).

The active-site Nucleophile; cysteine thiosulfonate intermediate is the cysteine 239.

Belongs to the PAPS reductase family. CysH subfamily.

It localises to the cytoplasm. The catalysed reaction is [thioredoxin]-disulfide + sulfite + adenosine 3',5'-bisphosphate + 2 H(+) = [thioredoxin]-dithiol + 3'-phosphoadenylyl sulfate. The protein operates within sulfur metabolism; hydrogen sulfide biosynthesis; sulfite from sulfate: step 3/3. In terms of biological role, catalyzes the formation of sulfite from phosphoadenosine 5'-phosphosulfate (PAPS) using thioredoxin as an electron donor. The chain is Phosphoadenosine 5'-phosphosulfate reductase from Shewanella oneidensis (strain ATCC 700550 / JCM 31522 / CIP 106686 / LMG 19005 / NCIMB 14063 / MR-1).